Reading from the N-terminus, the 715-residue chain is Staphylocoagulase (715 aa).

The first 26 residues, 1 to 26 (MKKQIISLGALAVASSLFTWDNKADA), serve as a signal peptide directing secretion. Over residues 306–327 (KYGESETKSPVVKEENKVEDPQ) the composition is skewed to basic and acidic residues. Disordered stretches follow at residues 306–348 (KYGE…EETT) and 430–470 (QGTE…FNKT). Over residues 431–443 (GTESTLKGIQGES) the composition is skewed to polar residues. 8 repeat units span residues 495–521 (ARPR…VSYG), 522–548 (ARPT…VSYG), 549–575 (ARPT…VSYG), 576–602 (ARPT…VSYG), 603–629 (ARPT…VSYG), 630–656 (ARPT…VSYG), 657–683 (ARPT…VSYG), and 684–710 (ARPT…ATYG). The segment at 495 to 710 (ARPRFNKPSE…THADGTATYG (216 aa)) is 8 X 27 AA tandem repeats of A-R-P-[RT]-[FQY]-[NK]-K-[PA]-S-[EK]-T-N-A-Y-N-V-T-T-[NH]-[QAG]-[DN]-G-[TQ]-[VA]-[ST]-Y-G. The segment at 674-697 (THGNGQVSYGARPTYNKPSKTNAY) is disordered.

The protein belongs to the staphylocoagulase family.

In terms of biological role, staphylocoagulase is an extracellular protein which specifically forms a complex with human prothrombin. This complex named staphylothrombin can clot fibrinogen without any proteolytic cleavage of prothrombin. The protein is Staphylocoagulase of Staphylococcus aureus.